Consider the following 145-residue polypeptide: Bacilliredoxin SAOUHSC_01610 (145 aa).

It belongs to the bacilliredoxin family.

This Staphylococcus aureus (strain NCTC 8325 / PS 47) protein is Bacilliredoxin SAOUHSC_01610.